The chain runs to 128 residues: Holo-[acyl-carrier-protein] synthase (128 aa).

2 residues coordinate Mg(2+): aspartate 8 and glutamate 60.

The protein belongs to the P-Pant transferase superfamily. AcpS family. Mg(2+) serves as cofactor.

It is found in the cytoplasm. It carries out the reaction apo-[ACP] + CoA = holo-[ACP] + adenosine 3',5'-bisphosphate + H(+). Functionally, transfers the 4'-phosphopantetheine moiety from coenzyme A to a Ser of acyl-carrier-protein. The polypeptide is Holo-[acyl-carrier-protein] synthase (Anaeromyxobacter dehalogenans (strain 2CP-C)).